Here is a 105-residue protein sequence, read N- to C-terminus: T cell receptor alpha variable 40 (105 aa).

The signal sequence occupies residues 1–19 (MNSSLDFLILILMFGGTSS). The Ig-like domain maps to 20-105 (NSVKQTGQIT…DSAVYYCLLG (86 aa)). The N-linked (GlcNAc...) asparagine glycan is linked to Asn-39. Cys-40 and Cys-102 are oxidised to a cystine.

In terms of assembly, alpha-beta TR is a heterodimer composed of an alpha and beta chain; disulfide-linked. The alpha-beta TR is associated with the transmembrane signaling CD3 coreceptor proteins to form the TR-CD3 (TcR or TCR). The assembly of alpha-beta TR heterodimers with CD3 occurs in the endoplasmic reticulum where a single alpha-beta TR heterodimer associates with one CD3D-CD3E heterodimer, one CD3G-CD3E heterodimer and one CD247 homodimer forming a stable octameric structure. CD3D-CD3E and CD3G-CD3E heterodimers preferentially associate with TR alpha and TR beta chains, respectively. The association of the CD247 homodimer is the last step of TcR assembly in the endoplasmic reticulum and is required for transport to the cell surface.

It localises to the cell membrane. Its function is as follows. V region of the variable domain of T cell receptor (TR) alpha chain that participates in the antigen recognition. Alpha-beta T cell receptors are antigen specific receptors which are essential to the immune response and are present on the cell surface of T lymphocytes. Recognize peptide-major histocompatibility (MH) (pMH) complexes that are displayed by antigen presenting cells (APC), a prerequisite for efficient T cell adaptive immunity against pathogens. Binding of alpha-beta TR to pMH complex initiates TR-CD3 clustering on the cell surface and intracellular activation of LCK that phosphorylates the ITAM motifs of CD3G, CD3D, CD3E and CD247 enabling the recruitment of ZAP70. In turn ZAP70 phosphorylates LAT, which recruits numerous signaling molecules to form the LAT signalosome. The LAT signalosome propagates signal branching to three major signaling pathways, the calcium, the mitogen-activated protein kinase (MAPK) kinase and the nuclear factor NF-kappa-B (NF-kB) pathways, leading to the mobilization of transcription factors that are critical for gene expression and essential for T cell growth and differentiation. The T cell repertoire is generated in the thymus, by V-(D)-J rearrangement. This repertoire is then shaped by intrathymic selection events to generate a peripheral T cell pool of self-MH restricted, non-autoaggressive T cells. Post-thymic interaction of alpha-beta TR with the pMH complexes shapes TR structural and functional avidity. The polypeptide is T cell receptor alpha variable 40 (Homo sapiens (Human)).